The primary structure comprises 85 residues: Hepcidin (85 aa).

The first 22 residues, 1–22, serve as a signal peptide directing secretion; it reads MALSTRIQAACLLLLLLASVAS. A propeptide spanning residues 23–54 is cleaved from the precursor; sequence VSVLPHQTGQLTDLRAQDTAGAEAGLQPTLQL. 4 disulfide bridges follow: Cys67–Cys83, Cys70–Cys73, Cys71–Cys79, and Cys74–Cys82.

Belongs to the hepcidin family. In terms of assembly, interacts with SLC40A1; this interaction promotes SLC40A1 rapid ubiquitination.

The protein localises to the secreted. Its function is as follows. Liver-produced hormone that constitutes the main circulating regulator of iron absorption and distribution across tissues. Acts by promoting endocytosis and degradation of ferroportin/SLC40A1, leading to the retention of iron in iron-exporting cells and decreased flow of iron into plasma. Controls the major flows of iron into plasma: absorption of dietary iron in the intestine, recycling of iron by macrophages, which phagocytose old erythrocytes and other cells, and mobilization of stored iron from hepatocytes. Has strong antimicrobial activity against E.coli ML35P N.cinerea and weaker against S.epidermidis, S.aureus and group b streptococcus bacteria. Active against the fungus C.albicans. No activity against P.aeruginosa. In Canis lupus familiaris (Dog), this protein is Hepcidin (HAMP).